Reading from the N-terminus, the 151-residue chain is Transcriptional regulator MraZ (151 aa).

2 SpoVT-AbrB domains span residues 5–52 and 81–124; these read IHQV…PLSE and ATDL…SQEE.

It belongs to the MraZ family. As to quaternary structure, forms oligomers.

It is found in the cytoplasm. The protein resides in the nucleoid. The protein is Transcriptional regulator MraZ of Marinomonas sp. (strain MWYL1).